Here is a 519-residue protein sequence, read N- to C-terminus: Cytochrome P450 52A13 (519 aa).

Residue cysteine 466 participates in heme binding.

The protein belongs to the cytochrome P450 family. It depends on heme as a cofactor.

The protein localises to the membrane. Its function is as follows. Together with an NADPH cytochrome P450 the enzyme system catalyzes the terminal hydroxylation as the first step in the assimilation of alkanes and fatty acids. In Debaryomyces hansenii (Yeast), this protein is Cytochrome P450 52A13 (CYP52A13).